Here is a 528-residue protein sequence, read N- to C-terminus: Calcium-dependent protein kinase 13 (528 aa).

Residue glycine 2 is the site of N-myristoyl glycine attachment. The span at 17–32 shows a compositional bias: basic and acidic residues; sequence KSNYSGHDHARKDAAG. A disordered region spans residues 17–37; that stretch reads KSNYSGHDHARKDAAGGKKSA. Phosphoserine is present on serine 43. Residues 54 to 312 enclose the Protein kinase domain; the sequence is YLLDRELGRG…AKQVLEHPWI (259 aa). ATP-binding positions include 60–68 and lysine 83; that span reads LGRGEFGVT. Aspartate 178 functions as the Proton acceptor in the catalytic mechanism. Serine 218 carries the post-translational modification Phosphoserine. Residues 318–348 are autoinhibitory domain; the sequence is APNVPLGDVVKSRLKQFSVMNRFKRKALRVI. 4 consecutive EF-hand domains span residues 355–390, 391–426, 427–462, and 463–498; these read EEVE…FSTQ, LAES…LQKV, ANDE…DGGD, and DCVD…GTDW. Ca(2+) is bound by residues aspartate 368, aspartate 370, aspartate 372, glutamate 379, aspartate 404, threonine 410, glutamate 415, aspartate 440, aspartate 442, asparagine 444, tyrosine 446, glutamate 451, aspartate 476, aspartate 478, aspartate 480, and arginine 482. At serine 484 the chain carries Phosphoserine. Glutamate 487 is a binding site for Ca(2+). Serine 522 carries the post-translational modification Phosphoserine.

The protein belongs to the protein kinase superfamily. Ser/Thr protein kinase family. CDPK subfamily.

It localises to the cell membrane. The catalysed reaction is L-seryl-[protein] + ATP = O-phospho-L-seryl-[protein] + ADP + H(+). It carries out the reaction L-threonyl-[protein] + ATP = O-phospho-L-threonyl-[protein] + ADP + H(+). Its activity is regulated as follows. Activated by calcium. Autophosphorylation may play an important role in the regulation of the kinase activity. May play a role in signal transduction pathways that involve calcium as a second messenger. This is Calcium-dependent protein kinase 13 (CPK13) from Arabidopsis thaliana (Mouse-ear cress).